Reading from the N-terminus, the 285-residue chain is NAD kinase (285 aa).

Catalysis depends on aspartate 66, which acts as the Proton acceptor. NAD(+) contacts are provided by residues 66–67, 137–138, arginine 148, arginine 165, aspartate 167, and 178–183; these read DG, ND, and TAYSLS.

It belongs to the NAD kinase family. A divalent metal cation serves as cofactor.

The protein resides in the cytoplasm. The catalysed reaction is NAD(+) + ATP = ADP + NADP(+) + H(+). Its function is as follows. Involved in the regulation of the intracellular balance of NAD and NADP, and is a key enzyme in the biosynthesis of NADP. Catalyzes specifically the phosphorylation on 2'-hydroxyl of the adenosine moiety of NAD to yield NADP. This is NAD kinase from Chlorobium phaeobacteroides (strain BS1).